The chain runs to 577 residues: Arginine--tRNA ligase (577 aa).

A 'HIGH' region motif is present at residues 122-132 (PNVAKEMHVGH).

It belongs to the class-I aminoacyl-tRNA synthetase family. In terms of assembly, monomer.

Its subcellular location is the cytoplasm. The catalysed reaction is tRNA(Arg) + L-arginine + ATP = L-arginyl-tRNA(Arg) + AMP + diphosphate. This Escherichia coli (strain ATCC 8739 / DSM 1576 / NBRC 3972 / NCIMB 8545 / WDCM 00012 / Crooks) protein is Arginine--tRNA ligase.